We begin with the raw amino-acid sequence, 172 residues long: NADH-quinone oxidoreductase subunit B (172 aa).

4 residues coordinate [4Fe-4S] cluster: Cys46, Cys47, Cys111, and Cys141.

This sequence belongs to the complex I 20 kDa subunit family. As to quaternary structure, NDH-1 is composed of 14 different subunits. Subunits NuoB, C, D, E, F, and G constitute the peripheral sector of the complex. Requires [4Fe-4S] cluster as cofactor.

It localises to the cell membrane. It carries out the reaction a quinone + NADH + 5 H(+)(in) = a quinol + NAD(+) + 4 H(+)(out). Functionally, NDH-1 shuttles electrons from NADH, via FMN and iron-sulfur (Fe-S) centers, to quinones in the respiratory chain. The immediate electron acceptor for the enzyme in this species is believed to be a menaquinone. Couples the redox reaction to proton translocation (for every two electrons transferred, four hydrogen ions are translocated across the cytoplasmic membrane), and thus conserves the redox energy in a proton gradient. The sequence is that of NADH-quinone oxidoreductase subunit B from Bacillus mycoides (strain KBAB4) (Bacillus weihenstephanensis).